The primary structure comprises 352 residues: Transcription factor RSL2 (352 aa).

A compositionally biased stretch (polar residues) spans 160–169 (SVTTTKSLTG). Residues 160-277 (SVTTTKSLTG…ASRGAATDPQ (118 aa)) are disordered. A compositionally biased stretch (basic residues) spans 183–192 (KRARVNKRAQ). Over residues 223-232 (SRQNSSTTFC) the composition is skewed to polar residues. The interval 272-285 (AATDPQSLYARKRR) is basic motif. One can recognise a bHLH domain in the interval 272 to 321 (AATDPQSLYARKRRERINERLRILQNLVPNGTKVDISTMLEEAVHYVKFL). Residues 286 to 321 (ERINERLRILQNLVPNGTKVDISTMLEEAVHYVKFL) form a helix-loop-helix motif region.

Homodimer. Expressed in roots. Expressed in root epidermal hair cells.

The protein resides in the nucleus. Its function is as follows. Transcription factor involved in the regulation of root hair elongation. Does not seem to be a direct transcriptional target of RHD6 and RSL1. Involved in the regulation of root hair elongation in response to low phosphate. The chain is Transcription factor RSL2 from Arabidopsis thaliana (Mouse-ear cress).